The following is a 216-amino-acid chain: Flagellin B2 (216 aa).

The propeptide occupies 1 to 12; it reads MKIKEFMSNKKG. N-linked (GlcNAc...) asparagine glycans are attached at residues N38, N72, N77, N113, N172, and N208.

The protein belongs to the archaeal flagellin family. Post-translationally, N-linked glycans consist of the 779 Da trisaccharide beta-ManNAc(Thr)-(1-4)-beta-GlcNAc3NAcA-(1-3)-beta-GlcNAc.

The protein resides in the archaeal flagellum. Functionally, flagellin is the subunit protein which polymerizes to form the filaments of archaeal flagella. The polypeptide is Flagellin B2 (flaB2) (Methanococcus voltae).